A 464-amino-acid chain; its full sequence is 3-isopropylmalate dehydratase large subunit (464 aa).

3 residues coordinate [4Fe-4S] cluster: Cys-337, Cys-397, and Cys-400.

It belongs to the aconitase/IPM isomerase family. LeuC type 1 subfamily. In terms of assembly, heterodimer of LeuC and LeuD. It depends on [4Fe-4S] cluster as a cofactor.

It catalyses the reaction (2R,3S)-3-isopropylmalate = (2S)-2-isopropylmalate. Its pathway is amino-acid biosynthesis; L-leucine biosynthesis; L-leucine from 3-methyl-2-oxobutanoate: step 2/4. Its function is as follows. Catalyzes the isomerization between 2-isopropylmalate and 3-isopropylmalate, via the formation of 2-isopropylmaleate. The protein is 3-isopropylmalate dehydratase large subunit of Bacillus cereus (strain ZK / E33L).